Consider the following 657-residue polypeptide: Glycogen debranching enzyme (657 aa).

D336 acts as the Nucleophile in catalysis. E371 functions as the Proton donor in the catalytic mechanism. Residues N458 to D467 show a composition bias toward basic and acidic residues. The tract at residues N458–K479 is disordered.

The protein belongs to the glycosyl hydrolase 13 family.

The enzyme catalyses Hydrolysis of (1-&gt;6)-alpha-D-glucosidic linkages to branches with degrees of polymerization of three or four glucose residues in limit dextrin.. It participates in glycan degradation; glycogen degradation. In terms of biological role, removes maltotriose and maltotetraose chains that are attached by 1,6-alpha-linkage to the limit dextrin main chain, generating a debranched limit dextrin. The polypeptide is Glycogen debranching enzyme (Escherichia coli (strain 55989 / EAEC)).